The sequence spans 209 residues: MQYINATEIMDDIDEPRLFEEDGVEALVVALVAPLLKPLGYRLVRVKLLGLNGLTLQIMAERADGTMTIEDCEIISKTISPLLDVQNVIERKYHLEISSPGIDRPLVRKSDFFHWQGYTAKIETRTIVNGRRKFRGALENVTQDGFILNIDAAPEEETVYVSFSNITNAHLVLTDKLIRDALKKDKNLRQQLIPEDDFNISESEINFSN.

The protein belongs to the RimP family.

It localises to the cytoplasm. Required for maturation of 30S ribosomal subunits. This chain is Ribosome maturation factor RimP, found in Bartonella bacilliformis (strain ATCC 35685 / KC583 / Herrer 020/F12,63).